A 95-amino-acid chain; its full sequence is Small ribosomal subunit protein bS6 (95 aa).

Belongs to the bacterial ribosomal protein bS6 family.

Functionally, binds together with bS18 to 16S ribosomal RNA. In Geobacillus sp. (strain WCH70), this protein is Small ribosomal subunit protein bS6.